The following is a 485-amino-acid chain: Glutamyl-tRNA(Gln) amidotransferase subunit A (485 aa).

Catalysis depends on charge relay system residues Lys-79 and Ser-154. Ser-178 serves as the catalytic Acyl-ester intermediate.

Belongs to the amidase family. GatA subfamily. Heterotrimer of A, B and C subunits.

The catalysed reaction is L-glutamyl-tRNA(Gln) + L-glutamine + ATP + H2O = L-glutaminyl-tRNA(Gln) + L-glutamate + ADP + phosphate + H(+). Its function is as follows. Allows the formation of correctly charged Gln-tRNA(Gln) through the transamidation of misacylated Glu-tRNA(Gln) in organisms which lack glutaminyl-tRNA synthetase. The reaction takes place in the presence of glutamine and ATP through an activated gamma-phospho-Glu-tRNA(Gln). The polypeptide is Glutamyl-tRNA(Gln) amidotransferase subunit A (Geobacillus stearothermophilus (Bacillus stearothermophilus)).